The primary structure comprises 435 residues: Methionine aminopeptidase 2-2 (435 aa).

The segment at 1-92 is disordered; that stretch reads MAAQTTEKLQ…VPVSNLFPNN (92 aa). Residues 24–33 are compositionally biased toward low complexity; that stretch reads DAPAAGQAEA. The segment covering 34–45 has biased composition (acidic residues); that stretch reads GEAEEDSDDEKD. The span at 59–73 shows a compositional bias: basic residues; sequence AKKKKRKSKKKKKGG. Histidine 197 is a substrate binding site. The a divalent metal cation site is built by aspartate 217, aspartate 228, and histidine 297. Histidine 305 provides a ligand contact to substrate. Positions 330 and 425 each coordinate a divalent metal cation.

The protein belongs to the peptidase M24A family. Methionine aminopeptidase eukaryotic type 2 subfamily. Co(2+) is required as a cofactor. Requires Zn(2+) as cofactor. Mn(2+) serves as cofactor. The cofactor is Fe(2+).

Its subcellular location is the cytoplasm. The catalysed reaction is Release of N-terminal amino acids, preferentially methionine, from peptides and arylamides.. Its function is as follows. Cotranslationally removes the N-terminal methionine from nascent proteins. The N-terminal methionine is often cleaved when the second residue in the primary sequence is small and uncharged (Met-Ala-, Cys, Gly, Pro, Ser, Thr, or Val). This is Methionine aminopeptidase 2-2 from Aspergillus clavatus (strain ATCC 1007 / CBS 513.65 / DSM 816 / NCTC 3887 / NRRL 1 / QM 1276 / 107).